The sequence spans 1057 residues: Exportin-1 (1057 aa).

In terms of domain architecture, Importin N-terminal spans 36–102 (AQMVLGKFQE…KNYIVSLIIR (67 aa)). 11 HEAT repeats span residues 239–275 (AEPSKLVKLLLHKYFPEPLFRNSTLKCLTEIGNLNLG), 281–321 (AVFI…FIHT), 462–501 (NTQHIMLEKLQTLISGREFTFQRLNTLCWAIGSISGAQNK), 506–544 (RFLVTVIKDLLELCQNKKGKDNKAVIASDIMYIVGQYPR), 551–588 (KFLKTVVNKLFEFMHESHPGVQDMACDTFLKISKQCKR), 596–633 (EESQPFINELLNQLSTTIAHLEQSQIHTFYEAVGYMIA), 739–776 (KETLKLLETFIEKSSDKQVIYSNFLQPLLEAVLGDYRT), 781–818 (TRDPEVLSLMTAIITSLKQLVHPEVPKILEAVFETTLS), 855–892 (QQFKLLIDCVVWAFKHTERNISETGLHILKELIENVSK), 902–925 (KTYLVSLLNDILYILTDSFHKSGF), and 926–965 (ALECDILRMMFQVVENGVVKIPLFDPQQANFPSNSEYVKE).

It belongs to the exportin family. As to quaternary structure, component of a nuclear export receptor complex.

Its subcellular location is the nucleus. The protein localises to the cytoplasm. It is found in the perinuclear region. Mediates the nuclear export of cellular proteins (cargos) bearing a leucine-rich nuclear export signal (NES). The protein is Exportin-1 (xpo1) of Dictyostelium discoideum (Social amoeba).